The primary structure comprises 86 residues: Protein Vpu (86 aa).

The Extracellular portion of the chain corresponds to 1–8 (MDIVQQVG). Residues 9–29 (LLVVLIIELVIVIVIWVKVYK) traverse the membrane as a helical segment. The Cytoplasmic portion of the chain corresponds to 30-86 (LCKEDRRQKKIDRLIARIRERAEDSGNESDGDTEELQDLITEGDNLMHIGIRDNRNN). Phosphoserine; by host CK2 is present on residues Ser54 and Ser58.

The protein belongs to the HIV-1 VPU protein family. As to quaternary structure, homopentamer. Interacts with host CD4 and BRTC; these interactions induce proteasomal degradation of CD4. Interacts with host BST2; this interaction leads to the degradation of host BST2. Interacts with host FBXW11. Interacts with host AP1M1; this interaction plays a role in the mistrafficking and subsequent degradation of host BST2. Interacts with host RANBP2; this interaction allows Vpu to down-regulate host BLM sumoylation. Forms pentamers or hexamers. Interacts with host CD4 and BRTC; these interactions induce proteasomal degradation of CD4. Interacts with host BST2; this interaction leads to the degradation of host BST2. Interacts with host FBXW11. Interacts with host AP1M1; this interaction plays a role in the mistrafficking and subsequent degradation of host BST2. Post-translationally, phosphorylated by host CK2. This phosphorylation is necessary for interaction with human BTRC and degradation of CD4.

It is found in the host membrane. Its activity is regulated as follows. Ion channel activity is inhibited by hexamethylene amiloride in vitro. Functionally, enhances virion budding by targeting host CD4 and Tetherin/BST2 to proteasome degradation. Degradation of CD4 prevents any unwanted premature interactions between viral Env and its host receptor CD4 in the endoplasmic reticulum. Degradation of antiretroviral protein Tetherin/BST2 is important for virion budding, as BST2 tethers new viral particles to the host cell membrane. Mechanistically, Vpu bridges either CD4 or BST2 to BTRC, a substrate recognition subunit of the Skp1/Cullin/F-box protein E3 ubiquitin ligase, induces their ubiquitination and subsequent proteasomal degradation. The alteration of the E3 ligase specificity by Vpu seems to promote the degradation of host IKBKB, leading to NF-kappa-B down-regulation and subsequent apoptosis. Acts as a viroporin that forms an oligomeric ion channel in membranes. Modulates the host DNA repair mechanisms to promote degradation of nuclear viral cDNA in cells that are already productively infected in order to suppress immune sensing and proviral hyper-integration (superinfection). Manipulates PML-NBs and modulates SUMOylation of host BLM protein thereby enhancing its DNA-end processing activity toward viral unintegrated linear DNA. Also inhibits RAD52-mediated homologous repair of viral cDNA, preventing the generation of dead-end circular forms of single copies of the long terminal repeat and permitting sustained nucleolytic attack. This chain is Protein Vpu, found in Pan troglodytes (Chimpanzee).